We begin with the raw amino-acid sequence, 338 residues long: tRNA N6-adenosine threonylcarbamoyltransferase (338 aa).

Fe cation is bound by residues histidine 110 and histidine 114. Residues 132–136, aspartate 165, glycine 178, and asparagine 274 each bind substrate; that span reads ILSGG. Aspartate 298 provides a ligand contact to Fe cation.

The protein belongs to the KAE1 / TsaD family. Requires Fe(2+) as cofactor.

It is found in the cytoplasm. It catalyses the reaction L-threonylcarbamoyladenylate + adenosine(37) in tRNA = N(6)-L-threonylcarbamoyladenosine(37) in tRNA + AMP + H(+). Functionally, required for the formation of a threonylcarbamoyl group on adenosine at position 37 (t(6)A37) in tRNAs that read codons beginning with adenine. Is involved in the transfer of the threonylcarbamoyl moiety of threonylcarbamoyl-AMP (TC-AMP) to the N6 group of A37, together with TsaE and TsaB. TsaD likely plays a direct catalytic role in this reaction. The sequence is that of tRNA N6-adenosine threonylcarbamoyltransferase from Borrelia hermsii (strain HS1 / DAH).